The chain runs to 251 residues: Flap endonuclease Xni (251 aa).

A Mg(2+)-binding site is contributed by Asp104. One can recognise a 5'-3' exonuclease domain in the interval 160 to 249; sequence VQPQQLPDYW…IDGNLQQLRL (90 aa). Positions 171, 172, 180, 182, and 185 each coordinate K(+). The tract at residues 184–189 is interaction with DNA; sequence GIGPKS.

The protein belongs to the Xni family. It depends on Mg(2+) as a cofactor. K(+) serves as cofactor.

Its function is as follows. Has flap endonuclease activity. During DNA replication, flap endonucleases cleave the 5'-overhanging flap structure that is generated by displacement synthesis when DNA polymerase encounters the 5'-end of a downstream Okazaki fragment. This Escherichia coli O45:K1 (strain S88 / ExPEC) protein is Flap endonuclease Xni.